The sequence spans 307 residues: 4-hydroxythreonine-4-phosphate dehydrogenase (307 aa).

Substrate contacts are provided by histidine 121 and threonine 122. Histidine 150, histidine 189, and histidine 245 together coordinate a divalent metal cation. Substrate is bound by residues lysine 253, asparagine 262, and arginine 271.

It belongs to the PdxA family. As to quaternary structure, homodimer. Zn(2+) serves as cofactor. It depends on Mg(2+) as a cofactor. Co(2+) is required as a cofactor.

It is found in the cytoplasm. It carries out the reaction 4-(phosphooxy)-L-threonine + NAD(+) = 3-amino-2-oxopropyl phosphate + CO2 + NADH. It functions in the pathway cofactor biosynthesis; pyridoxine 5'-phosphate biosynthesis; pyridoxine 5'-phosphate from D-erythrose 4-phosphate: step 4/5. Catalyzes the NAD(P)-dependent oxidation of 4-(phosphooxy)-L-threonine (HTP) into 2-amino-3-oxo-4-(phosphooxy)butyric acid which spontaneously decarboxylates to form 3-amino-2-oxopropyl phosphate (AHAP). The chain is 4-hydroxythreonine-4-phosphate dehydrogenase from Sulfurimonas denitrificans (strain ATCC 33889 / DSM 1251) (Thiomicrospira denitrificans (strain ATCC 33889 / DSM 1251)).